A 413-amino-acid chain; its full sequence is Alpha-1-antitrypsin-like protein GS55-LT (413 aa).

Positions 1–21 (MPSSISWGLLLLAGLSCLATG) are cleaved as a signal peptide. 3 N-linked (GlcNAc...) asparagine glycosylation sites follow: N65, N102, and N123. An RCL region spans residues 368-387 (RHTVKGPMALTLAPEVKFNR).

It belongs to the serpin family.

The protein resides in the secreted. Its function is as follows. Inhibitor of serine proteases. The chain is Alpha-1-antitrypsin-like protein GS55-LT from Ictidomys tridecemlineatus (Thirteen-lined ground squirrel).